The following is a 334-amino-acid chain: Holliday junction branch migration complex subunit RuvB (334 aa).

Positions 4–186 (ADRLIAPENP…FGITQRLEYY (183 aa)) are large ATPase domain (RuvB-L). Residues Ile25, Arg26, Gly67, Lys70, Thr71, Thr72, 133-135 (EDY), Arg176, Tyr186, and Arg223 contribute to the ATP site. Thr71 is a binding site for Mg(2+). The segment at 187-257 (KIPDLQNIVQ…TADKALNMLD (71 aa)) is small ATPAse domain (RuvB-S). A head domain (RuvB-H) region spans residues 260–334 (SKGFDYMDRK…RAYLHFGIEK (75 aa)). Arg315 and Arg320 together coordinate DNA.

Belongs to the RuvB family. In terms of assembly, homohexamer. Forms an RuvA(8)-RuvB(12)-Holliday junction (HJ) complex. HJ DNA is sandwiched between 2 RuvA tetramers; dsDNA enters through RuvA and exits via RuvB. An RuvB hexamer assembles on each DNA strand where it exits the tetramer. Each RuvB hexamer is contacted by two RuvA subunits (via domain III) on 2 adjacent RuvB subunits; this complex drives branch migration. In the full resolvosome a probable DNA-RuvA(4)-RuvB(12)-RuvC(2) complex forms which resolves the HJ.

It is found in the cytoplasm. The catalysed reaction is ATP + H2O = ADP + phosphate + H(+). Its function is as follows. The RuvA-RuvB-RuvC complex processes Holliday junction (HJ) DNA during genetic recombination and DNA repair, while the RuvA-RuvB complex plays an important role in the rescue of blocked DNA replication forks via replication fork reversal (RFR). RuvA specifically binds to HJ cruciform DNA, conferring on it an open structure. The RuvB hexamer acts as an ATP-dependent pump, pulling dsDNA into and through the RuvAB complex. RuvB forms 2 homohexamers on either side of HJ DNA bound by 1 or 2 RuvA tetramers; 4 subunits per hexamer contact DNA at a time. Coordinated motions by a converter formed by DNA-disengaged RuvB subunits stimulates ATP hydrolysis and nucleotide exchange. Immobilization of the converter enables RuvB to convert the ATP-contained energy into a lever motion, pulling 2 nucleotides of DNA out of the RuvA tetramer per ATP hydrolyzed, thus driving DNA branch migration. The RuvB motors rotate together with the DNA substrate, which together with the progressing nucleotide cycle form the mechanistic basis for DNA recombination by continuous HJ branch migration. Branch migration allows RuvC to scan DNA until it finds its consensus sequence, where it cleaves and resolves cruciform DNA. In Vibrio vulnificus (strain YJ016), this protein is Holliday junction branch migration complex subunit RuvB.